The sequence spans 374 residues: Gibberellin 3-beta-dioxygenase 1 (374 aa).

In terms of domain architecture, Fe2OG dioxygenase spans 206-307 (KACAALQLNS…RFSVAYLYGP (102 aa)). Fe cation is bound by residues His-231, Asp-233, and His-288. The active site involves Arg-298. Arg-298 is a binding site for 2-oxoglutarate.

This sequence belongs to the iron/ascorbate-dependent oxidoreductase family. GA3OX subfamily. Requires L-ascorbate as cofactor. The cofactor is Fe(2+). As to expression, expressed in radicles, roots, internodes, cotyledons, leaves and shoots. Barely detected in developing seeds. Not detected in flowers or young fruits.

The catalysed reaction is gibberellin A20 + 2-oxoglutarate + O2 = gibberellin A1 + succinate + CO2. Its pathway is plant hormone biosynthesis; gibberellin biosynthesis. In terms of biological role, converts the inactive gibberellin (GA) precursors GA9 and GA20 in the bioactives gibberellins GA4 and GA1. Has a small activity on GA29, producing GA8. Unable to convert GA20 to GA5, GA5 to GA3 or GA12 to GA14. Involved in the production of bioactive GA for vegetative growth and development, but not for the 3-beta-hydroxylation of GA in developing seeds. The polypeptide is Gibberellin 3-beta-dioxygenase 1 (LE) (Pisum sativum (Garden pea)).